The following is a 403-amino-acid chain: 3-(3-hydroxy-phenyl)propionate transporter (403 aa).

Over 1–16 the chain is Cytoplasmic; the sequence is MSTRTPSSSSSRLMLT. The helical transmembrane segment at 17 to 37 threads the bilayer; sequence IGLCFLVALMEGLDLQAAGIA. At 38-53 the chain is on the periplasmic side; sequence AGGIAQAFALDKMQMG. A helical membrane pass occupies residues 54–74; it reads WIFSAGILGLLPGALVGGMLA. Residues 75-81 are Cytoplasmic-facing; that stretch reads DRYGRKR. A helical transmembrane segment spans residues 82–102; the sequence is ILIGSVALFGLFSLATAIAWD. Residues 103–105 are Periplasmic-facing; the sequence is FPS. Residues 106 to 126 form a helical membrane-spanning segment; that stretch reads LVFARLMTGVGLGAALPNLIA. The Cytoplasmic segment spans residues 127–142; sequence LTSEAAGPRFRGTAVS. Residues 143–163 form a helical membrane-spanning segment; it reads LMYCGVPIGAALAATLGFAGA. Residue asparagine 164 is a topological domain, periplasmic. Residues 165–185 form a helical membrane-spanning segment; that stretch reads LAWQTVFWVGGVVPLILVPLL. Over 186-217 the chain is Cytoplasmic; that stretch reads MRWLPESAVFAGEKQSAPPLRALFAPETATAT. The helical transmembrane segment at 218 to 238 threads the bilayer; that stretch reads LLLWLCYFFTLLVVYMLINWL. At 239 to 253 the chain is on the periplasmic side; that stretch reads PLLLVEQGFQPSQAA. The helical transmembrane segment at 254–274 threads the bilayer; sequence GVMFALQMGAASGTLMLGALM. The Cytoplasmic segment spans residues 275 to 279; the sequence is DKLRP. The helical transmembrane segment at 280–300 threads the bilayer; sequence VTMSLLIYSGMLASLLALGTV. Topologically, residues 301–306 are periplasmic; sequence SSFNGM. Residues 307-327 form a helical membrane-spanning segment; the sequence is LLAGFVAGLFATGGQSVLYAL. Topologically, residues 328–339 are cytoplasmic; that stretch reads APLFYSSQIRAT. The helical transmembrane segment at 340-360 threads the bilayer; the sequence is GVGTAVAVGRLGAMSGPLLAG. Residues 361-369 are Periplasmic-facing; that stretch reads KMLALGTGT. A helical membrane pass occupies residues 370–390; the sequence is VGVMAASAPGILVAGLAVFIL. The Cytoplasmic segment spans residues 391–403; the sequence is MSRRSRIQPCADA.

This sequence belongs to the major facilitator superfamily. Aromatic acid:H(+) symporter (AAHS) (TC 2.A.1.15) family.

The protein resides in the cell inner membrane. It carries out the reaction 3-(3-hydroxyphenyl)propanoate(in) + H(+)(in) = 3-(3-hydroxyphenyl)propanoate(out) + H(+)(out). Its activity is regulated as follows. Inhibited by carbonyl cyanide m-chlorophenylhydrazone (CCCP), which dissipates the proton motive force. Uptake of 3-(3-hydroxyphenyl)propionate (3HPP) across the cytoplasmic membrane. Transport is driven by the proton motive force. Does not transport benzoate, 3-hydroxybenzoate or gentisate. In Escherichia coli (strain K12), this protein is 3-(3-hydroxy-phenyl)propionate transporter.